Reading from the N-terminus, the 521-residue chain is Colicin-E1* (521 aa).

2 disordered regions span residues asparagine 26–histidine 52 and serine 127–glutamine 163. Residues aspartate 30 to glycine 42 show a composition bias toward gly residues. Residues lysine 133 to alanine 145 show a composition bias toward basic residues. Positions glutamate 146–glutamine 163 are enriched in basic and acidic residues. 2 helical membrane-spanning segments follow: residues alanine 470 to leucine 486 and isoleucine 493 to lysine 509.

This sequence belongs to the channel forming colicin family.

It is found in the cell membrane. Its function is as follows. This colicin is a channel-forming colicin. This class of transmembrane toxins depolarize the cytoplasmic membrane, leading to dissipation of cellular energy. Functionally, colicins are polypeptide toxins produced by and active against E.coli and closely related bacteria. This Shigella sonnei protein is Colicin-E1* (cea).